Reading from the N-terminus, the 283-residue chain is Elongation factor Ts (283 aa).

Positions 79–82 are involved in Mg(2+) ion dislocation from EF-Tu; sequence TDFV.

The protein belongs to the EF-Ts family.

Its subcellular location is the cytoplasm. Functionally, associates with the EF-Tu.GDP complex and induces the exchange of GDP to GTP. It remains bound to the aminoacyl-tRNA.EF-Tu.GTP complex up to the GTP hydrolysis stage on the ribosome. This is Elongation factor Ts from Shewanella putrefaciens (strain CN-32 / ATCC BAA-453).